We begin with the raw amino-acid sequence, 427 residues long: Probable aspartic proteinase GIP1 (427 aa).

The N-terminal stretch at 1–25 (MPPPLPSLCNFNLAILFLFLTPTFQ) is a signal peptide. In terms of domain architecture, Peptidase A1 spans 41–404 (YTLSVFLKTP…DLDSNRFGFT (364 aa)). Residues Asn99, Asn169, Asn245, Asn259, Asn298, and Asn304 are each glycosylated (N-linked (GlcNAc...) asparagine).

This sequence belongs to the peptidase A1 family. Interacts with the Phytophtora sojae xyloglucanase XEG1 and xyloglucanase-like XLP1. Possesses stronger binding affinity with XLP1, a truncated paralog of P.sojae XEG1 which has no enzyme activity.

The protein resides in the secreted. The protein localises to the extracellular space. It is found in the apoplast. Its function is as follows. Involved in plant defense against Phytophtora sojae. Contributes positively to soybean resistance against P.sojae. Binds the P.sojae xyloglucanase XEG1 and inhibits its cell wall degrading enzyme activity and its contribution as P.sojae virulence factor. XEG1 acts as an important virulence factor during P.sojae infection but also acts as a pathogen-associated molecular pattern (PAMP) in soybean and solanaceous species, where it can trigger defense responses including cell death. Functionally, (Microbial infection) Possesses stronger binding affinity with XLP1, a truncated paralog of P.sojae XEG1 which has no enzyme activity. Is impaired in its inhibitor activity towards the P.sojae xyloglucanase XEG1 when hijacked by XLP1 binding. This is Probable aspartic proteinase GIP1 from Glycine max (Soybean).